A 279-amino-acid chain; its full sequence is Thymidylate synthase 1 (279 aa).

141–142 (RR) contacts dUMP. The Nucleophile role is filled by Cys-161. DUMP is bound by residues 181–184 (RSND), Asn-192, and 222–224 (HVY). (6R)-5,10-methylene-5,6,7,8-tetrahydrofolate is bound at residue Asp-184. Ala-278 is a (6R)-5,10-methylene-5,6,7,8-tetrahydrofolate binding site.

The protein belongs to the thymidylate synthase family. Bacterial-type ThyA subfamily. As to quaternary structure, homodimer.

The protein localises to the cytoplasm. The enzyme catalyses dUMP + (6R)-5,10-methylene-5,6,7,8-tetrahydrofolate = 7,8-dihydrofolate + dTMP. It participates in pyrimidine metabolism; dTTP biosynthesis. In terms of biological role, catalyzes the reductive methylation of 2'-deoxyuridine-5'-monophosphate (dUMP) to 2'-deoxythymidine-5'-monophosphate (dTMP) while utilizing 5,10-methylenetetrahydrofolate (mTHF) as the methyl donor and reductant in the reaction, yielding dihydrofolate (DHF) as a by-product. This enzymatic reaction provides an intracellular de novo source of dTMP, an essential precursor for DNA biosynthesis. This chain is Thymidylate synthase 1, found in Bacillus subtilis (strain 168).